Reading from the N-terminus, the 395-residue chain is Major outer membrane protein P.IA (395 aa).

Residues 1-19 form the signal peptide; sequence MRKKLTALVLSALPLAAVA.

Belongs to the Gram-negative porin family. As to quaternary structure, homotrimer.

Its subcellular location is the cell outer membrane. In terms of biological role, serves as a slightly cation selective porin. Major antigen on the gonococcal cell surface and it may have pathogenic properties in addition to its porin activity. In Neisseria meningitidis serogroup A / serotype 4A (strain DSM 15465 / Z2491), this protein is Major outer membrane protein P.IA (porA).